The following is a 492-amino-acid chain: Phytoene desaturase (lycopene-forming) (492 aa).

Thr-5–Gly-38 lines the FAD pocket.

The protein belongs to the carotenoid/retinoid oxidoreductase family. FAD is required as a cofactor.

It is found in the cell membrane. It carries out the reaction 15-cis-phytoene + 4 A = all-trans-lycopene + 4 AH2. It functions in the pathway carotenoid biosynthesis; lycopene biosynthesis. With respect to regulation, inhibited by NAD and NADP. Its function is as follows. Converts 15-cis-phytoene into all-trans-lycopene via the intermediary of all-trans-phytofluene, all-trans-zeta-carotene and all-trans-neurosporene, by the introduction of four double bonds. The polypeptide is Phytoene desaturase (lycopene-forming) (crtI) (Pantoea ananas (Erwinia uredovora)).